The sequence spans 136 residues: Congerin-2 (136 aa).

S2 is subject to N-acetylserine. A Galectin domain is found at 4–136 (RAEVRNIPFK…DARLTFVRLE (133 aa)). 70–76 (WQQEERS) is an a beta-D-galactoside binding site.

In terms of assembly, homodimer.

Functionally, this protein binds beta-galactoside. Its physiological function is not yet known. The chain is Congerin-2 from Conger myriaster (Conger eel).